We begin with the raw amino-acid sequence, 784 residues long: Lon protease (784 aa).

Residues 11-204 enclose the Lon N-terminal domain; sequence IPVLPLRDVV…YLMAMMESEI (194 aa). 356-363 contributes to the ATP binding site; sequence GPPGVGKT. A Lon proteolytic domain is found at 592–773; sequence ENRVGQVTGL…EEVLTLALQN (182 aa). Active-site residues include Ser-679 and Lys-722.

This sequence belongs to the peptidase S16 family. Homohexamer. Organized in a ring with a central cavity. ATP binding and hydrolysis do not affect the oligomeric state of the enzyme.

The protein resides in the cytoplasm. The enzyme catalyses Hydrolysis of proteins in presence of ATP.. Its activity is regulated as follows. Contains an allosteric site (distinct from its active site), whose occupancy by an unfolded polypeptide leads to enzyme activation. Functionally, ATP-dependent serine protease that mediates the selective degradation of mutant and abnormal proteins as well as certain short-lived regulatory proteins. Required for cellular homeostasis and for survival from DNA damage and developmental changes induced by stress. Degrades polypeptides processively to yield small peptide fragments that are 5 to 10 amino acids long. Binds to DNA in a double-stranded, site-specific manner. Endogenous substrates include the regulatory proteins RcsA and SulA, the transcriptional activator SoxS, and UmuD. Its overproduction specifically inhibits translation through at least two different pathways, one of them being the YoeB-YefM toxin-antitoxin system. This is Lon protease from Escherichia coli O6:H1 (strain CFT073 / ATCC 700928 / UPEC).